The primary structure comprises 556 residues: Oxygen-dependent choline dehydrogenase (556 aa).

4–33 (DYIIIGAGSAGNVLATRLTEDPNTSVLLLE) lines the FAD pocket. The Proton acceptor role is filled by H473.

The protein belongs to the GMC oxidoreductase family. It depends on FAD as a cofactor.

The catalysed reaction is choline + A = betaine aldehyde + AH2. It catalyses the reaction betaine aldehyde + NAD(+) + H2O = glycine betaine + NADH + 2 H(+). Its pathway is amine and polyamine biosynthesis; betaine biosynthesis via choline pathway; betaine aldehyde from choline (cytochrome c reductase route): step 1/1. Functionally, involved in the biosynthesis of the osmoprotectant glycine betaine. Catalyzes the oxidation of choline to betaine aldehyde and betaine aldehyde to glycine betaine at the same rate. This Escherichia coli O139:H28 (strain E24377A / ETEC) protein is Oxygen-dependent choline dehydrogenase.